The primary structure comprises 129 residues: uncharacterized protein (129 aa).

This sequence belongs to the asfivirus C129R family.

The protein localises to the virion. Its function is as follows. Plays a role in the inhibition of type I interferon signaling pathway. Mechanistically, specifically interacts with 2',3'-cGAMP and cleaves it via its phosphodiesterase activity. In turn, prevents 2',3'-cGAMP interaction with host ER-resident STING1 leading to inhibition of downstream signaling pathway and type I interferon production. This is an uncharacterized protein from African swine fever virus (isolate Pig/Kenya/KEN-50/1950) (ASFV).